The primary structure comprises 307 residues: Nicotinamide/nicotinic acid mononucleotide adenylyltransferase 2 (307 aa).

NAD(+) is bound by residues Ser-16 and Phe-17. An ATP-binding site is contributed by His-24. NAD(+) contacts are provided by Trp-92 and Thr-95. Residues Cys-164 and Cys-165 are each lipidated (S-palmitoyl cysteine). NAD(+)-binding residues include Gly-200, Asp-202, Leu-212, Trp-213, and Arg-232. 271–274 (TKSR) provides a ligand contact to ATP.

It belongs to the eukaryotic NMN adenylyltransferase family. In terms of assembly, monomer. Requires Mg(2+) as cofactor. In terms of processing, degraded in response to injured neurite. Degradation is caused by polyubiquitination by MYCBP2 after recognition by FBXO45. Palmitoylated; palmitoylation is required for membrane association.

Its subcellular location is the golgi apparatus membrane. The protein resides in the cytoplasmic vesicle membrane. The protein localises to the cytoplasm. It is found in the cell projection. It localises to the axon. It carries out the reaction beta-nicotinamide D-ribonucleotide + ATP + H(+) = diphosphate + NAD(+). The catalysed reaction is nicotinate beta-D-ribonucleotide + ATP + H(+) = deamido-NAD(+) + diphosphate. Its pathway is cofactor biosynthesis; NAD(+) biosynthesis; NAD(+) from nicotinamide D-ribonucleotide: step 1/1. It functions in the pathway cofactor biosynthesis; NAD(+) biosynthesis; deamido-NAD(+) from nicotinate D-ribonucleotide: step 1/1. Inhibited by P1-(adenosine-5')-P3-(nicotinamide-riboside-5')-triphosphate (Np3AD) and P1-(adenosine-5')-P4-(nicotinamide-riboside-5')-tetraphosphate (Np4AD). Its function is as follows. Nicotinamide/nicotinate-nucleotide adenylyltransferase that acts as an axon maintenance factor. Axon survival factor required for the maintenance of healthy axons: acts by delaying Wallerian axon degeneration, an evolutionarily conserved process that drives the loss of damaged axons. Catalyzes the formation of NAD(+) from nicotinamide mononucleotide (NMN) and ATP. Can also use the deamidated form; nicotinic acid mononucleotide (NaMN) as substrate but with a lower efficiency. Cannot use triazofurin monophosphate (TrMP) as substrate. Also catalyzes the reverse reaction, i.e. the pyrophosphorolytic cleavage of NAD(+). For the pyrophosphorolytic activity prefers NAD(+), NADH and NaAD as substrates and degrades nicotinic acid adenine dinucleotide phosphate (NHD) less effectively. Fails to cleave phosphorylated dinucleotides NADP(+), NADPH and NaADP(+). Also acts as an activator of ADP-ribosylation by supporting the catalytic activity of PARP16 and promoting mono-ADP-ribosylation of ribosomes by PARP16. May be involved in the maintenance of axonal integrity. This chain is Nicotinamide/nicotinic acid mononucleotide adenylyltransferase 2 (Nmnat2), found in Rattus norvegicus (Rat).